A 302-amino-acid chain; its full sequence is GTPase Era (302 aa).

The Era-type G domain maps to 4–171 (KAGFVALVGR…KEKIVSLLPE (168 aa)). The G1 stretch occupies residues 12–19 (GRTNVGKS). 12 to 19 (GRTNVGKS) contacts GTP. The segment at 38 to 42 (QTTRN) is G2. The G3 stretch occupies residues 59-62 (DTPG). GTP-binding positions include 59-63 (DTPGI) and 121-124 (NKID). The tract at residues 121-124 (NKID) is G4. Residues 150–152 (ISA) form a G5 region. One can recognise a KH type-2 domain in the interval 202–280 (LEEEVPHGVY…FLDLWVKTRK (79 aa)).

It belongs to the TRAFAC class TrmE-Era-EngA-EngB-Septin-like GTPase superfamily. Era GTPase family. As to quaternary structure, monomer.

It is found in the cytoplasm. The protein localises to the cell membrane. Functionally, an essential GTPase that binds both GDP and GTP, with rapid nucleotide exchange. Plays a role in 16S rRNA processing and 30S ribosomal subunit biogenesis and possibly also in cell cycle regulation and energy metabolism. The polypeptide is GTPase Era (Thermoanaerobacter pseudethanolicus (strain ATCC 33223 / 39E) (Clostridium thermohydrosulfuricum)).